Reading from the N-terminus, the 350-residue chain is MATLLLLPGDGIGPEVCAQVRRVAAALTPDLKVDEALYGGASYDTHGTPLTDEVREQALASDAVLMGAVGGPKWADAPRHLRPEAGLLNLRKAMDVFANLRPAYCFEALAGASSLKPELVSGLDIMFVRELVGGVYFGQPRGIEDLADGQKKGFDTQVYTTSEIERVGRVAFELARGRTNKVHSAEKSNVMESGLLWKQVITELHAREYPDVQLEHILADNCAMQLVRAPKQFDVIVTDNLFGDILSDAAAMLTGSLGMLPSAALGAPGKPGLYEPIHGSAPDIAGKGLANPLAAILSFEMALRWSLKQTEAADALLAAVKAALDNGARTRDLGGSLTTTQMGDAVLAAL.

71–84 is a binding site for NAD(+); it reads GPKWADAPRHLRPE. The substrate site is built by Arg91, Arg101, Arg129, and Asp220. Mg(2+) contacts are provided by Asp220, Asp244, and Asp248. 279–291 contacts NAD(+); that stretch reads GSAPDIAGKGLAN.

Belongs to the isocitrate and isopropylmalate dehydrogenases family. LeuB type 1 subfamily. Homodimer. Mg(2+) serves as cofactor. It depends on Mn(2+) as a cofactor.

It is found in the cytoplasm. It carries out the reaction (2R,3S)-3-isopropylmalate + NAD(+) = 4-methyl-2-oxopentanoate + CO2 + NADH. It functions in the pathway amino-acid biosynthesis; L-leucine biosynthesis; L-leucine from 3-methyl-2-oxobutanoate: step 3/4. Its function is as follows. Catalyzes the oxidation of 3-carboxy-2-hydroxy-4-methylpentanoate (3-isopropylmalate) to 3-carboxy-4-methyl-2-oxopentanoate. The product decarboxylates to 4-methyl-2 oxopentanoate. The protein is 3-isopropylmalate dehydrogenase of Caulobacter vibrioides (strain ATCC 19089 / CIP 103742 / CB 15) (Caulobacter crescentus).